The sequence spans 355 residues: Uroporphyrinogen decarboxylase (355 aa).

Substrate contacts are provided by residues 27–31, aspartate 78, tyrosine 155, serine 210, and histidine 328; that span reads RQAGR.

It belongs to the uroporphyrinogen decarboxylase family. In terms of assembly, homodimer.

It is found in the cytoplasm. It carries out the reaction uroporphyrinogen III + 4 H(+) = coproporphyrinogen III + 4 CO2. The protein operates within porphyrin-containing compound metabolism; protoporphyrin-IX biosynthesis; coproporphyrinogen-III from 5-aminolevulinate: step 4/4. Its function is as follows. Catalyzes the decarboxylation of four acetate groups of uroporphyrinogen-III to yield coproporphyrinogen-III. The polypeptide is Uroporphyrinogen decarboxylase (Azotobacter vinelandii (strain DJ / ATCC BAA-1303)).